Here is a 418-residue protein sequence, read N- to C-terminus: Deubiquitinase and deneddylase Dub1 (418 aa).

The segment covering 1–10 has biased composition (polar residues); that stretch reads MLSPTNSISK. The interval 1–23 is disordered; it reads MLSPTNSISKTAPVPPQDSSKPV. The helical transmembrane segment at 40–60 threads the bilayer; it reads TALAVLLVVVTLGLILLFYSF. The disordered stretch occupies residues 72 to 144; the sequence is TRPSTKEQPT…PLPPKAPKPV (73 aa). Positions 86–141 are enriched in pro residues; sequence VPLPSPPLAVPRPSTPPPPVISRPSTPPAPTPAISPPSTPSAPKPSTPPPLPPKAP. Catalysis depends on residues His288, Asp305, and Cys358.

The protein belongs to the peptidase C48 family.

Its subcellular location is the secreted. The protein localises to the host cell. The protein resides in the membrane. Effector proteins function to alter host cell physiology and promote bacterial survival in host tissues. This protease possesses deubiquitinating and deneddylating activities. The sequence is that of Deubiquitinase and deneddylase Dub1 (cdu1) from Chlamydia trachomatis serovar B (strain TZ1A828/OT).